A 355-amino-acid polypeptide reads, in one-letter code: Peptide chain release factor 1 (355 aa).

Position 233 is an N5-methylglutamine (glutamine 233).

This sequence belongs to the prokaryotic/mitochondrial release factor family. Post-translationally, methylated by PrmC. Methylation increases the termination efficiency of RF1.

It is found in the cytoplasm. Peptide chain release factor 1 directs the termination of translation in response to the peptide chain termination codons UAG and UAA. This is Peptide chain release factor 1 from Caldicellulosiruptor bescii (strain ATCC BAA-1888 / DSM 6725 / KCTC 15123 / Z-1320) (Anaerocellum thermophilum).